We begin with the raw amino-acid sequence, 374 residues long: Arrestin domain-containing protein 15 (374 aa).

The tract at residues 344–374 (HHLNRSKAKVSKTEQQQRKTRNIVEENPYFR) is disordered.

The protein belongs to the arrestin family.

The sequence is that of Arrestin domain-containing protein 15 (arrd-15) from Caenorhabditis elegans.